A 405-amino-acid chain; its full sequence is Growth/differentiation factor 11 (405 aa).

The first 20 residues, 1–20 (MVLAAPLLLGFLLLALELRP), serve as a signal peptide directing secretion. Positions 21-296 (RGEAAEGPAA…VLENTKRSRR (276 aa)) are excised as a propeptide. Asn-92 is a glycosylation site (N-linked (GlcNAc...) asparagine). 4 cysteine pairs are disulfide-bonded: Cys-302-Cys-312, Cys-311-Cys-370, Cys-339-Cys-402, and Cys-343-Cys-404.

It belongs to the TGF-beta family. As to quaternary structure, homodimer; disulfide-linked. Interacts directly with ACVR2B. Interacts directly with ACVR2A. Interacts with ACVR1B, TGFBR1 and ACVR1C in an ACVR2B-dependent manner. Interacts with FST isoform 2/FS288. Post-translationally, synthesized as large precursor molecule that undergoes proteolytic cleavage by furin-like proteases. This produces an inactive form consisting of the mature C-terminal portion non-covalently bound to its cleaved N-terminal propeptide. Activation of the mature form requires additional cleavage of the propeptide by a tolloid-like metalloproteinase. Highly expressed in the developing limb bud, initially detected in the distal mesenchyme, and later localizing to regions around the developing bones. Is also expressed in adult dental pulp and brain.

Its subcellular location is the secreted. In terms of biological role, secreted signal that acts globally to regulate anterior/posterior axial patterning during development. May play critical roles in patterning both mesodermal and neural tissues. It is required for proper vertebral patterning and orofacial development. Signals through activin receptors type-2, ACVR2A and ACVR2B, and activin receptors type-1, ACVR1B, ACVR1C and TGFBR1 leading to the phosphorylation of SMAD2 and SMAD3. The polypeptide is Growth/differentiation factor 11 (Gdf11) (Mus musculus (Mouse)).